A 259-amino-acid chain; its full sequence is Imidazole glycerol phosphate synthase subunit HisF (259 aa).

Active-site residues include D11 and D130.

This sequence belongs to the HisA/HisF family. In terms of assembly, heterodimer of HisH and HisF.

It localises to the cytoplasm. It carries out the reaction 5-[(5-phospho-1-deoxy-D-ribulos-1-ylimino)methylamino]-1-(5-phospho-beta-D-ribosyl)imidazole-4-carboxamide + L-glutamine = D-erythro-1-(imidazol-4-yl)glycerol 3-phosphate + 5-amino-1-(5-phospho-beta-D-ribosyl)imidazole-4-carboxamide + L-glutamate + H(+). It participates in amino-acid biosynthesis; L-histidine biosynthesis; L-histidine from 5-phospho-alpha-D-ribose 1-diphosphate: step 5/9. Functionally, IGPS catalyzes the conversion of PRFAR and glutamine to IGP, AICAR and glutamate. The HisF subunit catalyzes the cyclization activity that produces IGP and AICAR from PRFAR using the ammonia provided by the HisH subunit. The polypeptide is Imidazole glycerol phosphate synthase subunit HisF (Oleidesulfovibrio alaskensis (strain ATCC BAA-1058 / DSM 17464 / G20) (Desulfovibrio alaskensis)).